The chain runs to 86 residues: Large ribosomal subunit protein bL31B (86 aa).

The protein belongs to the bacterial ribosomal protein bL31 family. Type B subfamily. As to quaternary structure, part of the 50S ribosomal subunit.

This Streptococcus equi subsp. equi (strain 4047) protein is Large ribosomal subunit protein bL31B.